Here is an 801-residue protein sequence, read N- to C-terminus: Protocadherin beta-8 (801 aa).

The signal sequence occupies residues M1–A29. Residues E30–L691 lie on the Extracellular side of the membrane. 5 Cadherin domains span residues V36–F134, M139–F243, Y248–V348, F353–F452, and Y457–V562. C97 and C103 form a disulfide bridge. N419 and N437 each carry an N-linked (GlcNAc...) asparagine glycan. N-linked (GlcNAc...) asparagine glycosylation is present at N568. A Cadherin 6 domain is found at G569–L672. Residues V692–V710 traverse the membrane as a helical segment. The Cytoplasmic portion of the chain corresponds to A711 to K801.

As to quaternary structure, forms homodimers in trans (molecules expressed by two different cells). Forms promiscuous heterodimers in cis (at the plasma membrane of the same cell) with other protocadherins.

It localises to the cell membrane. Functionally, calcium-dependent cell-adhesion protein involved in cells self-recognition and non-self discrimination. Thereby, it is involved in the establishment and maintenance of specific neuronal connections in the brain. The protein is Protocadherin beta-8 of Homo sapiens (Human).